Consider the following 142-residue polypeptide: NCT transcriptional regulatory complex subunit B (142 aa).

Belongs to the NC2 beta/DR1 family. In terms of assembly, forms the NCT transcriptional regulatory complex with nctA and mot1.

It is found in the nucleus. Part of the NCT transcriptional regulatory complex that acts as a key regulator of ergosterol biosynthesis and the azole exporter cdr1B. The NCT complex binds the promoters of genes linked to azole susceptibility, and especially represses the expression of cdr1B transporter. The chain is NCT transcriptional regulatory complex subunit B from Aspergillus fumigatus (strain CBS 144.89 / FGSC A1163 / CEA10) (Neosartorya fumigata).